The primary structure comprises 165 residues: Methylated-DNA--protein-cysteine methyltransferase, constitutive (165 aa).

Cysteine 130 acts as the Nucleophile; methyl group acceptor in catalysis.

The protein belongs to the MGMT family.

It is found in the cytoplasm. It catalyses the reaction a 6-O-methyl-2'-deoxyguanosine in DNA + L-cysteinyl-[protein] = S-methyl-L-cysteinyl-[protein] + a 2'-deoxyguanosine in DNA. It carries out the reaction a 4-O-methyl-thymidine in DNA + L-cysteinyl-[protein] = a thymidine in DNA + S-methyl-L-cysteinyl-[protein]. Its function is as follows. Involved in the cellular defense against the biological effects of O6-methylguanine (O6-MeG) and O4-methylthymine (O4-MeT) in DNA. Repairs the methylated nucleobase in DNA by stoichiometrically transferring the methyl group to a cysteine residue in the enzyme. This is a suicide reaction: the enzyme is irreversibly inactivated. In Bacillus subtilis (strain 168), this protein is Methylated-DNA--protein-cysteine methyltransferase, constitutive.